The sequence spans 648 residues: TBC1 domain family member 17 (648 aa).

The interval 218–309 (DPYSTTFSSF…PELKNRIFSG (92 aa)) is required for interaction with OPTN. The tract at residues 240-259 (PQPEGAASDLPPPPDDEPEP) is disordered. The Rab-GAP TBC domain maps to 310 to 520 (GLSPSLRREA…RLWEVLWTGL (211 aa)). The tract at residues 594–648 (LAPPAEPHSPSPTASPLPLSPTRAPPTPPPSTDTAPQPDSSLEILPEEEDEGADS) is disordered. Residues 597-624 (PAEPHSPSPTASPLPLSPTRAPPTPPPS) are compositionally biased toward pro residues. Serine 602 and serine 604 each carry phosphoserine. Threonine 606 is subject to Phosphothreonine. At serine 608 the chain carries Phosphoserine. Threonine 615 bears the Phosphothreonine mark. Residues 625–634 (TDTAPQPDSS) are compositionally biased toward low complexity. The segment covering 638-648 (LPEEEDEGADS) has biased composition (acidic residues).

As to quaternary structure, interacts with OPTN; this interaction mediates TBC1D17 transient association with Rab8.

The protein resides in the cytoplasmic vesicle. It localises to the autophagosome. It is found in the cytoplasm. The protein localises to the recycling endosome. In terms of biological role, probable RAB GTPase-activating protein that inhibits RAB8A/B function. Reduces Rab8 recruitment to tubules emanating from the endocytic recycling compartment (ERC) and inhibits Rab8-mediated endocytic trafficking, such as that of transferrin receptor (TfR). Involved in regulation of autophagy. This Homo sapiens (Human) protein is TBC1 domain family member 17.